The following is a 190-amino-acid chain: GTP cyclohydrolase 1 (190 aa).

Residues C75, H78, and C146 each contribute to the Zn(2+) site.

The protein belongs to the GTP cyclohydrolase I family. Homomer.

The enzyme catalyses GTP + H2O = 7,8-dihydroneopterin 3'-triphosphate + formate + H(+). Its pathway is cofactor biosynthesis; 7,8-dihydroneopterin triphosphate biosynthesis; 7,8-dihydroneopterin triphosphate from GTP: step 1/1. The chain is GTP cyclohydrolase 1 from Campylobacter concisus (strain 13826).